A 284-amino-acid chain; its full sequence is MLIIESVLLLRQHIRRLRQEGKRIALVPTMGNLHDGHMKLVDEAKASADVVVVSIFVNPMQFDRADDLARYPRTLQDDCEKLNKRHVDFVFAPTPAEVYPQGTEGQTYVDVPGLSTMLEGASRPGHFRGVSTIVSKLFNLVQPDVACFGEKDFQQLALIRKMVADMGYDIEIIGVPIVRAKDGLALSSRNGYLTADQRKIAPGLYKVLSAVAEKLAAGDRQLDEIIAIAEQELNEKGFRADDIQIRDADTLLELTDASQRAVILMAAWLGQARLIDNQIVTLGQ.

30–37 contributes to the ATP binding site; it reads MGNLHDGH. The active-site Proton donor is the histidine 37. Glutamine 61 is a binding site for (R)-pantoate. Glutamine 61 contributes to the beta-alanine binding site. 149–152 provides a ligand contact to ATP; the sequence is GEKD. (R)-pantoate is bound at residue glutamine 155. ATP contacts are provided by residues valine 178 and 186-189; that span reads LSSR.

This sequence belongs to the pantothenate synthetase family. Homodimer.

It localises to the cytoplasm. The enzyme catalyses (R)-pantoate + beta-alanine + ATP = (R)-pantothenate + AMP + diphosphate + H(+). The protein operates within cofactor biosynthesis; (R)-pantothenate biosynthesis; (R)-pantothenate from (R)-pantoate and beta-alanine: step 1/1. Its function is as follows. Catalyzes the condensation of pantoate with beta-alanine in an ATP-dependent reaction via a pantoyl-adenylate intermediate. The polypeptide is Pantothenate synthetase (Klebsiella pneumoniae (strain 342)).